A 542-amino-acid polypeptide reads, in one-letter code: MTVMEHTKAATIDLTKHGLHNVKEVVRNPSYEMLFEEETRADLTGYERGVVTELGAVAVDTGIFTGRSPKDKYIVKDATTEEHMWWTSDAVKNDNKPINKEVWDDLKELVTNQLSGKRLFVIDGYCGANPDTRLSIRVITEVAWQAHFVKNMFIRPTEEELATFEPDFVVMNGAKCTNDKWEEQGLNSENFTVFNLTERTQLIGGTWYGGEMKKGMFAMMNYFLPLKDIASMHCSANMGEEGDVAIFFGLSGTGKTTLSTDPKRALIGDDEHGWDDDGVFNFEGGCYAKTIKLSKEAEPDIYNAIRRDALLENVTVRSDGSIDFDDGSKTENTRVSYPLYHIDNIVKPVSKGGHANKVIFLSADAFGVLPPVSKLTPEQTKYHFLSGFTAKLAGTERGITEPTPTFSACFGAAFLTLHPTKYAEVLVKRMEAAGAEAYLVNTGWNGSGKRISIQDTRGIIDAILDGSIEDAKTKHIPIFNLEVPTSLPGVDPSILDPRDTYVDPLQWESKAKDLAERFINNFDKYTDNAEGKSLVAAGPQLD.

Substrate is bound by residues R67, Y208, and K214. Residues K214, H233, and 249 to 257 (GLSGTGKTT) each bind ATP. Residues K214 and H233 each contribute to the Mn(2+) site. D270 is a Mn(2+) binding site. ATP contacts are provided by residues E298, R334, 450 to 451 (RI), and T456. R334 provides a ligand contact to substrate.

It belongs to the phosphoenolpyruvate carboxykinase (ATP) family. Monomer. Mn(2+) is required as a cofactor.

The protein resides in the cytoplasm. It carries out the reaction oxaloacetate + ATP = phosphoenolpyruvate + ADP + CO2. The protein operates within carbohydrate biosynthesis; gluconeogenesis. In terms of biological role, involved in the gluconeogenesis. Catalyzes the conversion of oxaloacetate (OAA) to phosphoenolpyruvate (PEP) through direct phosphoryl transfer between the nucleoside triphosphate and OAA. The protein is Phosphoenolpyruvate carboxykinase (ATP) of Vibrio campbellii (strain ATCC BAA-1116).